The chain runs to 558 residues: Formate--tetrahydrofolate ligase 2 (558 aa).

67 to 74 (TPAGEGKT) serves as a coordination point for ATP.

Belongs to the formate--tetrahydrofolate ligase family.

The enzyme catalyses (6S)-5,6,7,8-tetrahydrofolate + formate + ATP = (6R)-10-formyltetrahydrofolate + ADP + phosphate. The protein operates within one-carbon metabolism; tetrahydrofolate interconversion. This Desulfitobacterium hafniense (strain Y51) protein is Formate--tetrahydrofolate ligase 2.